A 124-amino-acid polypeptide reads, in one-letter code: Small ribosomal subunit protein uS12 (124 aa).

Asp-89 carries the post-translational modification 3-methylthioaspartic acid. Residues 103–124 (DTAGVKDRRQSRSKYGAKSPKE) are disordered.

The protein belongs to the universal ribosomal protein uS12 family. Part of the 30S ribosomal subunit. Contacts proteins S8 and S17. May interact with IF1 in the 30S initiation complex.

Functionally, with S4 and S5 plays an important role in translational accuracy. In terms of biological role, interacts with and stabilizes bases of the 16S rRNA that are involved in tRNA selection in the A site and with the mRNA backbone. Located at the interface of the 30S and 50S subunits, it traverses the body of the 30S subunit contacting proteins on the other side and probably holding the rRNA structure together. The combined cluster of proteins S8, S12 and S17 appears to hold together the shoulder and platform of the 30S subunit. This Prochlorococcus marinus (strain NATL2A) protein is Small ribosomal subunit protein uS12.